The sequence spans 421 residues: Testin (421 aa).

The PET domain occupies 92 to 199; that stretch reads MILTNPVAAK…GDVKLPYEMG (108 aa). The segment at 133–164 is disordered; it reads EKQPVAGSEGAQYRKKQLAKQLPAHDQDPSKC. Positions 155-164 are enriched in basic and acidic residues; sequence PAHDQDPSKC. LIM zinc-binding domains are found at residues 234–297, 299–359, and 362–421; these read YFCY…CDSE, PRCA…NHAV, and QGCH…KMMS.

The protein belongs to the prickle / espinas / testin family. Interacts via LIM domain 1 with ZYX. Interacts (via LIM domain 3) with ENAH and VASP. Interacts with ALKBH4, talin, actin, alpha-actinin, GRIP1 and PXN. Interacts (via LIM domain 2) with ACTL7A (via N-terminus). Heterodimer with ACTL7A; the heterodimer interacts with ENAH to form a heterotrimer.

It is found in the cytoplasm. The protein resides in the cell junction. Its subcellular location is the focal adhesion. Scaffold protein that may play a role in cell adhesion, cell spreading and in the reorganization of the actin cytoskeleton. Plays a role in the regulation of cell proliferation. May act as a tumor suppressor. In Oryctolagus cuniculus (Rabbit), this protein is Testin (TES).